Consider the following 536-residue polypeptide: MSKFVFVTGGVVSSIGKGIVAASLGRLLKSRGYSVSILKLDPYLNVDPGTMSPFQHGEVFVTEDGAETDLDLGHYERFTDTAMTRLNSVTTGSIYQAVINKERRGSYNGGTVQVIPHITGEIRERIHRVASNSNADIVITEIGGTVGDIESLPFLEAIREFKNDVNKNDVTYIHVTLLPYIKTSGEIKTKPTQHSVKELRSIGIQPDLLVCRSDKEINDSLKRKLSGFCGVNLNCVIEALDADSIYSVPLSLKKEGLCKETLRCLDLEDKECDLESWEKIIHNLRNPGNPIKVALVGKYIELGDAYLSVVEALRHACIEQKAFLDLHWVSAEMIEEKSAEEYLHDVDAIVVPGGFGNRGVNGKIASIKFAREKKIPFLGLCLGMQCAVIEWARNVVQLPGASSSELDPESENPVIHLLPEQEDIVDLGGTMRLGVYPCRLQKNTTGKELYNEDVIYERHRHRYEFNNFYKQIFVDSGYKISGTSPDGRLVELIELVNHPYFLACQYHPEFLSRPGKPHPLFKGLIKASREKLEQSK.

The segment at 1 to 267 (MSKFVFVTGG…CKETLRCLDL (267 aa)) is amidoligase domain. Position 13 (S13) interacts with CTP. S13 serves as a coordination point for UTP. Residues 14–19 (SIGKGI) and D71 each bind ATP. Residues D71 and E141 each contribute to the Mg(2+) site. Residues 148-150 (DIE), 188-193 (KTKPTQ), and K224 each bind CTP. UTP is bound by residues 188-193 (KTKPTQ) and K224. In terms of domain architecture, Glutamine amidotransferase type-1 spans 292 to 534 (KVALVGKYIE…IKASREKLEQ (243 aa)). L-glutamine is bound at residue G354. C381 (nucleophile; for glutamine hydrolysis) is an active-site residue. L-glutamine is bound by residues 382–385 (LGMQ), E405, and R462. Catalysis depends on residues H507 and E509.

The protein belongs to the CTP synthase family. In terms of assembly, homotetramer.

It catalyses the reaction UTP + L-glutamine + ATP + H2O = CTP + L-glutamate + ADP + phosphate + 2 H(+). It carries out the reaction L-glutamine + H2O = L-glutamate + NH4(+). The enzyme catalyses UTP + NH4(+) + ATP = CTP + ADP + phosphate + 2 H(+). The protein operates within pyrimidine metabolism; CTP biosynthesis via de novo pathway; CTP from UDP: step 2/2. With respect to regulation, allosterically activated by GTP, when glutamine is the substrate; GTP has no effect on the reaction when ammonia is the substrate. The allosteric effector GTP functions by stabilizing the protein conformation that binds the tetrahedral intermediate(s) formed during glutamine hydrolysis. Inhibited by the product CTP, via allosteric rather than competitive inhibition. Functionally, catalyzes the ATP-dependent amination of UTP to CTP with either L-glutamine or ammonia as the source of nitrogen. Regulates intracellular CTP levels through interactions with the four ribonucleotide triphosphates. The chain is CTP synthase from Prochlorococcus marinus (strain MIT 9515).